We begin with the raw amino-acid sequence, 80 residues long: RNA-binding protein Hfq (80 aa).

In terms of domain architecture, Sm spans Glu-9–Val-68.

The protein belongs to the Hfq family. In terms of assembly, homohexamer.

In terms of biological role, RNA chaperone that binds small regulatory RNA (sRNAs) and mRNAs to facilitate mRNA translational regulation in response to envelope stress, environmental stress and changes in metabolite concentrations. Also binds with high specificity to tRNAs. This chain is RNA-binding protein Hfq, found in Thioalkalivibrio sulfidiphilus (strain HL-EbGR7).